We begin with the raw amino-acid sequence, 60 residues long: DNA gyrase inhibitor YacG (60 aa).

Residues cysteine 15, cysteine 18, cysteine 30, and cysteine 34 each contribute to the Zn(2+) site.

The protein belongs to the DNA gyrase inhibitor YacG family. In terms of assembly, interacts with GyrB. It depends on Zn(2+) as a cofactor.

Functionally, inhibits all the catalytic activities of DNA gyrase by preventing its interaction with DNA. Acts by binding directly to the C-terminal domain of GyrB, which probably disrupts DNA binding by the gyrase. The sequence is that of DNA gyrase inhibitor YacG from Nitrobacter hamburgensis (strain DSM 10229 / NCIMB 13809 / X14).